The sequence spans 915 residues: Protein MEI2-like 1 (915 aa).

The interval 1–90 (MPSDIMEQRG…NTTNGSQWES (90 aa)) is disordered. The segment covering 16 to 25 (HFHEDIHITS) has biased composition (basic and acidic residues). Polar residues predominate over residues 50–65 (MPKSSWTSESYQLKPQ). Positions 66 to 77 (SSFSGSHPSGSP) are enriched in low complexity. Ser76 bears the Phosphoserine mark. Residues 78 to 89 (NARNTTNGSQWE) are compositionally biased toward polar residues. RRM domains are found at residues 217–290 (RTLL…YSIS) and 302–375 (GALL…PTYP). Disordered stretches follow at residues 690 to 723 (PGRS…SSSN) and 854 to 915 (LFHT…LKEN). Residues 705–723 (PNERYRNLSHRRSESSSSN) show a composition bias toward basic and acidic residues. Over residues 882–898 (RSSSIDNYNSFSISSVS) the composition is skewed to polar residues.

Expressed in roots, shoots, leaves, flowers and siliques.

Its function is as follows. Probable RNA-binding transcriptional activator that plays a role in meiosis and vegetative growth. May be a downstream effector of TOR signaling pathway and recruited by RAPTOR1 for TOR substrate. This is Protein MEI2-like 1 (ML1) from Arabidopsis thaliana (Mouse-ear cress).